Consider the following 252-residue polypeptide: Small ribosomal subunit protein uS2 (252 aa).

The segment at 231-252 (SVESTAQEQVEETAQEETAVEA) is disordered. The span at 239–252 (QVEETAQEETAVEA) shows a compositional bias: acidic residues.

Belongs to the universal ribosomal protein uS2 family.

This is Small ribosomal subunit protein uS2 from Acetivibrio thermocellus (strain ATCC 27405 / DSM 1237 / JCM 9322 / NBRC 103400 / NCIMB 10682 / NRRL B-4536 / VPI 7372) (Clostridium thermocellum).